The sequence spans 376 residues: MESYDIIANQPVVIDNGSGVIKAGFAGDQIPKYCFPNYVGRPKHMRVMAGALEGDLFIGPKAEEHRGLLTIRYPMEHGVVRDWNDMERIWQYVYSKDQLQTFSEEHPVLLTEAPLNPSKNREKAAEVFFETFNVPALFISMQAVLSLYATGRTTGVVLDSGDGVTHAVPIYEGFAMPHSIMRVDIAGRDVSRYLRLLLRKEGADFHTSAEFEVVRTIKERACYLSINPQKDEALETEKVQYTLPDGSTLDVGPARFRAPELLFQPDLVGDESEGLHEVLAFAIHKSDMDLRRTLFSNIVLSGGSTLFKGFGDRLLSEVKKLAPKDVKIKISAPQERLYSTWIGGSILASLDTFKKMWVSKKEYEEDGSRAIHRKTF.

Methionine 1 carries the N-acetylmethionine modification. Tyrosine 4 is subject to 3'-nitrotyrosine.

It belongs to the actin family. ARP1 subfamily.

Its subcellular location is the cytoplasm. The protein resides in the cytoskeleton. It is found in the microtubule organizing center. The protein localises to the centrosome. Functionally, component of a multi-subunit complex involved in microtubule based vesicle motility. It is associated with the centrosome. This chain is Beta-centractin (Actr1b), found in Mus musculus (Mouse).